Here is a 96-residue protein sequence, read N- to C-terminus: Protein Vpr (96 aa).

Residues 1–42 (MEQAPEDQGPQREPYNEWTIEILEELKREAVRHFPRPWLHDL) form a homooligomerization region. Phosphoserine; by host is present on residues Ser-79, Ser-94, and Ser-96.

This sequence belongs to the HIV-1 VPR protein family. As to quaternary structure, homooligomer, may form homodimer. Interacts with p6-gag region of the Pr55 Gag precursor protein through a (Leu-X-X)4 motif near the C-terminus of the P6gag protein. Interacts with host UNG. May interact with host RAD23A/HHR23A. Interacts with host VPRBP/DCAF1, leading to hijack the CUL4A-RBX1-DDB1-DCAF1/VPRBP complex, mediating ubiquitination of host proteins such as TERT and ZGPAT and arrest of the cell cycle in G2 phase. In terms of processing, phosphorylated on several residues by host. These phosphorylations regulate VPR activity for the nuclear import of the HIV-1 pre-integration complex.

The protein localises to the virion. It localises to the host nucleus. The protein resides in the host extracellular space. In terms of biological role, during virus replication, may deplete host UNG protein, and incude G2-M cell cycle arrest. Acts by targeting specific host proteins for degradation by the 26S proteasome, through association with the cellular CUL4A-DDB1 E3 ligase complex by direct interaction with host VPRPB/DCAF-1. Cell cycle arrest reportedly occurs within hours of infection and is not blocked by antiviral agents, suggesting that it is initiated by the VPR carried into the virion. Additionally, VPR induces apoptosis in a cell cycle dependent manner suggesting that these two effects are mechanistically linked. Detected in the serum and cerebrospinal fluid of AIDS patient, VPR may also induce cell death to bystander cells. Functionally, during virus entry, plays a role in the transport of the viral pre-integration (PIC) complex to the host nucleus. This function is crucial for viral infection of non-dividing macrophages. May act directly at the nuclear pore complex, by binding nucleoporins phenylalanine-glycine (FG)-repeat regions. The chain is Protein Vpr from Human immunodeficiency virus type 1 group M subtype K (isolate 97ZR-EQTB11) (HIV-1).